A 250-amino-acid polypeptide reads, in one-letter code: Triosephosphate isomerase (250 aa).

9-11 contributes to the substrate binding site; it reads NWK. The Electrophile role is filled by H95. E167 acts as the Proton acceptor in catalysis. Substrate is bound by residues G173, S213, and 234–235; that span reads GG.

The protein belongs to the triosephosphate isomerase family. In terms of assembly, homodimer.

It is found in the cytoplasm. It catalyses the reaction D-glyceraldehyde 3-phosphate = dihydroxyacetone phosphate. It participates in carbohydrate biosynthesis; gluconeogenesis. It functions in the pathway carbohydrate degradation; glycolysis; D-glyceraldehyde 3-phosphate from glycerone phosphate: step 1/1. Functionally, involved in the gluconeogenesis. Catalyzes stereospecifically the conversion of dihydroxyacetone phosphate (DHAP) to D-glyceraldehyde-3-phosphate (G3P). The polypeptide is Triosephosphate isomerase (Flavobacterium johnsoniae (strain ATCC 17061 / DSM 2064 / JCM 8514 / BCRC 14874 / CCUG 350202 / NBRC 14942 / NCIMB 11054 / UW101) (Cytophaga johnsonae)).